The primary structure comprises 454 residues: Bifunctional protein GlmU (454 aa).

The pyrophosphorylase stretch occupies residues 1–226 (MSTTVIILAA…AFEVEGVNDR (226 aa)). Residues 8–11 (LAAG), K22, Q73, 78–79 (GT), 100–102 (YGD), G137, E151, N166, and N224 each bind UDP-N-acetyl-alpha-D-glucosamine. D102 provides a ligand contact to Mg(2+). N224 provides a ligand contact to Mg(2+). Residues 227-247 (LQLAALEREFQKQQAKELMQQ) are linker. Residues 248–454 (GVTFADPARF…NYQRPQKLKK (207 aa)) are N-acetyltransferase. Residues R330 and K348 each contribute to the UDP-N-acetyl-alpha-D-glucosamine site. H360 (proton acceptor) is an active-site residue. Residues Y363 and N374 each coordinate UDP-N-acetyl-alpha-D-glucosamine. Residues A377, 383–384 (NY), S402, A420, and R437 each bind acetyl-CoA.

The protein in the N-terminal section; belongs to the N-acetylglucosamine-1-phosphate uridyltransferase family. It in the C-terminal section; belongs to the transferase hexapeptide repeat family. As to quaternary structure, homotrimer. Mg(2+) is required as a cofactor.

The protein localises to the cytoplasm. It catalyses the reaction alpha-D-glucosamine 1-phosphate + acetyl-CoA = N-acetyl-alpha-D-glucosamine 1-phosphate + CoA + H(+). The catalysed reaction is N-acetyl-alpha-D-glucosamine 1-phosphate + UTP + H(+) = UDP-N-acetyl-alpha-D-glucosamine + diphosphate. Its pathway is nucleotide-sugar biosynthesis; UDP-N-acetyl-alpha-D-glucosamine biosynthesis; N-acetyl-alpha-D-glucosamine 1-phosphate from alpha-D-glucosamine 6-phosphate (route II): step 2/2. The protein operates within nucleotide-sugar biosynthesis; UDP-N-acetyl-alpha-D-glucosamine biosynthesis; UDP-N-acetyl-alpha-D-glucosamine from N-acetyl-alpha-D-glucosamine 1-phosphate: step 1/1. It functions in the pathway bacterial outer membrane biogenesis; LPS lipid A biosynthesis. Catalyzes the last two sequential reactions in the de novo biosynthetic pathway for UDP-N-acetylglucosamine (UDP-GlcNAc). The C-terminal domain catalyzes the transfer of acetyl group from acetyl coenzyme A to glucosamine-1-phosphate (GlcN-1-P) to produce N-acetylglucosamine-1-phosphate (GlcNAc-1-P), which is converted into UDP-GlcNAc by the transfer of uridine 5-monophosphate (from uridine 5-triphosphate), a reaction catalyzed by the N-terminal domain. This is Bifunctional protein GlmU from Acinetobacter baumannii (strain ACICU).